The following is a 928-amino-acid chain: Chitin synthase 2 (928 aa).

Disordered stretches follow at residues 1–45 and 110–179; these read MAYN…EAYA and AYYT…SPAP. Positions 17–28 are enriched in polar residues; the sequence is PSAQPQYDSRSP. The segment covering 130–140 has biased composition (basic and acidic residues); sequence PSHDEPYRPDT. Transmembrane regions (helical) follow at residues 472–492, 570–589, 613–633, 644–664, 678–698, 723–743, 753–773, 854–874, and 893–913; these read SAFG…YVAL, WLNG…YQLW, LFAW…TASL, TVLG…CFIL, MMMV…SIFL, FFGL…ASFL, CFLQ…IYAF, VTAW…IAGF, and VILW…CWFL.

This sequence belongs to the chitin synthase family. Class I subfamily.

Its subcellular location is the cell membrane. The catalysed reaction is [(1-&gt;4)-N-acetyl-beta-D-glucosaminyl](n) + UDP-N-acetyl-alpha-D-glucosamine = [(1-&gt;4)-N-acetyl-beta-D-glucosaminyl](n+1) + UDP + H(+). Its function is as follows. Polymerizes chitin, a structural polymer of the cell wall and septum, by transferring the sugar moiety of UDP-GlcNAc to the non-reducing end of the growing chitin polymer. CHS2 plays a synergistic role to CHS1 in normal yeast cell reproductive growth, even if this role is less predominant than for CHS1. With CHS3, plays an important role in virulence. The chain is Chitin synthase 2 from Exophiala dermatitidis (Black yeast-like fungus).